Consider the following 106-residue polypeptide: Large ribosomal subunit protein uL23 (106 aa).

This sequence belongs to the universal ribosomal protein uL23 family. As to quaternary structure, part of the 50S ribosomal subunit. Contacts protein L29, and trigger factor when it is bound to the ribosome.

One of the early assembly proteins it binds 23S rRNA. One of the proteins that surrounds the polypeptide exit tunnel on the outside of the ribosome. Forms the main docking site for trigger factor binding to the ribosome. The polypeptide is Large ribosomal subunit protein uL23 (Acinetobacter baumannii (strain SDF)).